The chain runs to 757 residues: Probable phospholipase C20G8.02, mitochondrial (757 aa).

The transit peptide at 1-13 (MILYIVLPFYVRT) directs the protein to the mitochondrion. A disordered region spans residues 289 to 330 (ESNSKPSTPVPTEELTSTTLLNDSSDPSDNFTPSNTESTIDL). The span at 302 to 329 (ELTSTTLLNDSSDPSDNFTPSNTESTID) shows a compositional bias: polar residues. Residue Ser524 is part of the active site. The DDHD domain occupies 547 to 757 (LDFPVANFFA…LAHFILTQLL (211 aa)).

It belongs to the PA-PLA1 family.

The protein localises to the mitochondrion. In terms of biological role, probable phospholipase that hydrolyzes phosphatidic acid. The protein is Probable phospholipase C20G8.02, mitochondrial of Schizosaccharomyces pombe (strain 972 / ATCC 24843) (Fission yeast).